Here is a 368-residue protein sequence, read N- to C-terminus: DNA replication and repair protein RecF (368 aa).

30-37 (GDNGAGKT) lines the ATP pocket.

Belongs to the RecF family.

It localises to the cytoplasm. The RecF protein is involved in DNA metabolism; it is required for DNA replication and normal SOS inducibility. RecF binds preferentially to single-stranded, linear DNA. It also seems to bind ATP. In Xanthomonas euvesicatoria pv. vesicatoria (strain 85-10) (Xanthomonas campestris pv. vesicatoria), this protein is DNA replication and repair protein RecF.